Consider the following 248-residue polypeptide: Something about silencing protein 5 (248 aa).

The YEATS domain occupies Met1–Pro139. Position 144 is a phosphoserine (Ser144). Residues Thr223–Lys248 are disordered.

As to quaternary structure, component of the SAS complex, at least composed of SAS2, SAS4 and SAS5. These three proteins constitute the core of the complex, and are sufficient to acetylate histones.

The protein localises to the nucleus. In terms of biological role, component of the SAS complex, a multiprotein complex that acetylates 'Lys-16' of histone H4 and 'Lys-14' of histone H3. The SAS complex is however unable to acetylate nucleosomal histones. The complex is involved in transcriptional silencing at telomeres and at HML locus. Also involved in rDNA silencing. In the complex, SAS5 is required for maximal histone acetyltransferase (HAT) activity of the complex, suggesting that it may be required to stabilize the complex or help in substrate recognition. This is Something about silencing protein 5 (SAS5) from Saccharomyces cerevisiae (strain ATCC 204508 / S288c) (Baker's yeast).